The sequence spans 563 residues: GTPase Obg (563 aa).

In terms of domain architecture, Obg spans 2–168 (SDFVDRVTVH…RDVILELKSI (167 aa)). The OBG-type G domain occupies 169–349 (ADVALVGFPS…LNFALSALVH (181 aa)). Residues 175–182 (GFPSAGKS), 200–204 (FTTLV), 221–224 (DVPG), 301–304 (NKID), and 330–332 (STA) each bind GTP. Mg(2+)-binding residues include Ser-182 and Thr-202. The OCT domain occupies 383–469 (DEGGSALEFT…ARMVEFDWDP (87 aa)). Residues 529-563 (RKAGHWADPTVDDDRHDETSLFGHGESSEDGETEE) are disordered.

This sequence belongs to the TRAFAC class OBG-HflX-like GTPase superfamily. OBG GTPase family. In terms of assembly, monomer. It depends on Mg(2+) as a cofactor.

Its subcellular location is the cytoplasm. In terms of biological role, an essential GTPase which binds GTP, GDP and possibly (p)ppGpp with moderate affinity, with high nucleotide exchange rates and a fairly low GTP hydrolysis rate. Plays a role in control of the cell cycle, stress response, ribosome biogenesis and in those bacteria that undergo differentiation, in morphogenesis control. The sequence is that of GTPase Obg from Bifidobacterium longum (strain NCC 2705).